The sequence spans 308 residues: Homeobox protein HMX3 (308 aa).

Disordered stretches follow at residues Met-1–Leu-57 and Ala-107–Thr-184. Over residues Pro-9–Lys-19 the composition is skewed to pro residues. Composition is skewed to basic and acidic residues over residues Ala-135–Ser-144 and Glu-156–Lys-177. A DNA-binding region (homeobox) is located at residues Lys-181–Leu-240.

Belongs to the HMX homeobox family.

Its subcellular location is the nucleus. Its function is as follows. Transcription factor involved in specification of neuronal cell types and which is required for inner ear and hypothalamus development. Binds to the 5'-CAAGTG-3' core sequence. The chain is Homeobox protein HMX3 (HMX3) from Gallus gallus (Chicken).